The following is a 409-amino-acid chain: 5-aminolevulinate synthase (409 aa).

Substrate is bound by residues arginine 21, serine 137, and lysine 156. Residues serine 189, histidine 217, and threonine 245 each contribute to the pyridoxal 5'-phosphate site. The active site involves lysine 248. Lysine 248 is modified (N6-(pyridoxal phosphate)lysine). Pyridoxal 5'-phosphate contacts are provided by threonine 277 and threonine 278. Threonine 365 provides a ligand contact to substrate.

This sequence belongs to the class-II pyridoxal-phosphate-dependent aminotransferase family. Homodimer. Requires pyridoxal 5'-phosphate as cofactor.

It catalyses the reaction succinyl-CoA + glycine + H(+) = 5-aminolevulinate + CO2 + CoA. Its pathway is porphyrin-containing compound metabolism; protoporphyrin-IX biosynthesis; 5-aminolevulinate from glycine: step 1/1. The polypeptide is 5-aminolevulinate synthase (hemA) (Paracoccus denitrificans (strain Pd 1222)).